The chain runs to 281 residues: 1-acyl-sn-glycerol-3-phosphate acyltransferase (281 aa).

3 consecutive transmembrane segments (helical) span residues 40 to 60 (IFVC…IMVL), 71 to 91 (LGNL…GIPI), and 110 to 130 (ASPI…VGVA). Positions 109 to 114 (HASPID) match the HXXXXD motif motif.

The protein belongs to the 1-acyl-sn-glycerol-3-phosphate acyltransferase family.

Its subcellular location is the membrane. The catalysed reaction is a 1-acyl-sn-glycero-3-phosphate + an acyl-CoA = a 1,2-diacyl-sn-glycero-3-phosphate + CoA. It functions in the pathway phospholipid metabolism; CDP-diacylglycerol biosynthesis; CDP-diacylglycerol from sn-glycerol 3-phosphate: step 2/3. Its function is as follows. Converts lysophosphatidic acid (LPA) into phosphatidic acid by incorporating acyl moiety at the 2 position. This enzyme uses erucoyl-CoA as an acyl donor. The sequence is that of 1-acyl-sn-glycerol-3-phosphate acyltransferase from Limnanthes alba (White meadowfoam).